An 83-amino-acid polypeptide reads, in one-letter code: Hainantoxin-III 11 (83 aa).

The signal sequence occupies residues 1–21 (MKASMFLALAGLVLLFVVGYA). Positions 22–48 (SESEEKDFPRELLSKIFAVDDFKGEER) are excised as a propeptide. Intrachain disulfides connect Cys-50-Cys-65, Cys-57-Cys-70, and Cys-64-Cys-77. At Leu-81 the chain carries Leucine amide.

Belongs to the neurotoxin 10 (Hwtx-1) family. 15 (Hntx-3) subfamily. As to quaternary structure, monomer. In terms of tissue distribution, expressed by the venom gland.

Its subcellular location is the secreted. Selective antagonist of neuronal tetrodotoxin (TTX)-sensitive voltage-gated sodium channels (IC(50)=1270 nM on Nav1.1/SCN1A, 270 nM on Nav1.2/SCN2A, 491 nM on Nav1.3/SCN3A and 232 nM on Nav1.7/SCN9A). This toxin suppress Nav1.7 current amplitude without significantly altering the activation, inactivation, and repriming kinetics. Short extreme depolarizations partially activate the toxin-bound channel, indicating voltage-dependent inhibition of this toxin. This toxin increases the deactivation of the Nav1.7 current after extreme depolarizations. The toxin-Nav1.7 complex is gradually dissociated upon prolonged strong depolarizations in a voltage-dependent manner, and the unbound toxin rebinds to Nav1.7 after a long repolarization. Moreover, analysis of chimeric channels showed that the DIIS3-S4 linker is critical for toxin binding to Nav1.7. These data are consistent with this toxin interacting with Nav1.7 site 4 and trapping the domain II voltage sensor in the closed state. The protein is Hainantoxin-III 11 of Cyriopagopus hainanus (Chinese bird spider).